A 158-amino-acid polypeptide reads, in one-letter code: SsrA-binding protein (158 aa).

The segment at 135–158 is disordered; sequence DKRKTLKDRDWERDKQRGFKKDLD. The span at 141 to 158 shows a compositional bias: basic and acidic residues; the sequence is KDRDWERDKQRGFKKDLD.

It belongs to the SmpB family.

Its subcellular location is the cytoplasm. Its function is as follows. Required for rescue of stalled ribosomes mediated by trans-translation. Binds to transfer-messenger RNA (tmRNA), required for stable association of tmRNA with ribosomes. tmRNA and SmpB together mimic tRNA shape, replacing the anticodon stem-loop with SmpB. tmRNA is encoded by the ssrA gene; the 2 termini fold to resemble tRNA(Ala) and it encodes a 'tag peptide', a short internal open reading frame. During trans-translation Ala-aminoacylated tmRNA acts like a tRNA, entering the A-site of stalled ribosomes, displacing the stalled mRNA. The ribosome then switches to translate the ORF on the tmRNA; the nascent peptide is terminated with the 'tag peptide' encoded by the tmRNA and targeted for degradation. The ribosome is freed to recommence translation, which seems to be the essential function of trans-translation. The sequence is that of SsrA-binding protein from Psychrobacter cryohalolentis (strain ATCC BAA-1226 / DSM 17306 / VKM B-2378 / K5).